We begin with the raw amino-acid sequence, 206 residues long: LexA repressor (206 aa).

Residues 28–48 constitute a DNA-binding region (H-T-H motif); it reads RAEIATRLGFKSANAAEEHLK. Catalysis depends on for autocatalytic cleavage activity residues S123 and K160.

The protein belongs to the peptidase S24 family. Homodimer.

The enzyme catalyses Hydrolysis of Ala-|-Gly bond in repressor LexA.. Its function is as follows. Represses a number of genes involved in the response to DNA damage (SOS response), including recA and lexA. In the presence of single-stranded DNA, RecA interacts with LexA causing an autocatalytic cleavage which disrupts the DNA-binding part of LexA, leading to derepression of the SOS regulon and eventually DNA repair. The sequence is that of LexA repressor from Shewanella baltica (strain OS223).